Consider the following 245-residue polypeptide: Collagen triple helix repeat-containing protein 1 (245 aa).

The first 32 residues, 1 to 32 (MHPQGRAAPPQLLLGLFLVLLLLLQLSAPISA), serve as a signal peptide directing secretion. The Collagen-like domain maps to 59–92 (QGPAGVPGRDGSPGANGIPGTPGIPGRDGFKGEK). The segment at 64 to 87 (VPGRDGSPGANGIPGTPGIPGRDG) is disordered. Residue asparagine 188 is glycosylated (N-linked (GlcNAc...) asparagine).

In terms of processing, N-glycosylated.

It is found in the secreted. Its subcellular location is the extracellular space. The protein localises to the extracellular matrix. May act as a negative regulator of collagen matrix deposition. This Mus musculus (Mouse) protein is Collagen triple helix repeat-containing protein 1 (Cthrc1).